We begin with the raw amino-acid sequence, 482 residues long: UDP-N-acetylmuramate--L-alanine ligase (482 aa).

123–129 (GTHGKTT) contacts ATP.

Belongs to the MurCDEF family.

Its subcellular location is the cytoplasm. It catalyses the reaction UDP-N-acetyl-alpha-D-muramate + L-alanine + ATP = UDP-N-acetyl-alpha-D-muramoyl-L-alanine + ADP + phosphate + H(+). Its pathway is cell wall biogenesis; peptidoglycan biosynthesis. Its function is as follows. Cell wall formation. The polypeptide is UDP-N-acetylmuramate--L-alanine ligase (Pseudomonas putida (strain ATCC 47054 / DSM 6125 / CFBP 8728 / NCIMB 11950 / KT2440)).